We begin with the raw amino-acid sequence, 74 residues long: U19-theraphotoxin-Cg1a (74 aa).

An N-terminal signal peptide occupies residues 1–7; that stretch reads IMFVWAS. Positions 8 to 36 are excised as a propeptide; sequence AAEVEERGSDQRDSPASLKSMETIFQSEQ. Cystine bridges form between Cys39–Cys53, Cys46–Cys58, and Cys52–Cys66.

The protein belongs to the neurotoxin 10 (Hwtx-1) family. 38 (Jztx-33) subfamily. Expressed by the venom gland.

The protein localises to the secreted. Probable ion channel inhibitor. In Chilobrachys guangxiensis (Chinese earth tiger tarantula), this protein is U19-theraphotoxin-Cg1a.